The chain runs to 328 residues: Tetraacyldisaccharide 4'-kinase (328 aa).

55-62 (TAGGNGKT) lines the ATP pocket.

Belongs to the LpxK family.

It carries out the reaction a lipid A disaccharide + ATP = a lipid IVA + ADP + H(+). It functions in the pathway glycolipid biosynthesis; lipid IV(A) biosynthesis; lipid IV(A) from (3R)-3-hydroxytetradecanoyl-[acyl-carrier-protein] and UDP-N-acetyl-alpha-D-glucosamine: step 6/6. Transfers the gamma-phosphate of ATP to the 4'-position of a tetraacyldisaccharide 1-phosphate intermediate (termed DS-1-P) to form tetraacyldisaccharide 1,4'-bis-phosphate (lipid IVA). This is Tetraacyldisaccharide 4'-kinase from Escherichia coli O17:K52:H18 (strain UMN026 / ExPEC).